A 747-amino-acid chain; its full sequence is DNA topoisomerase 4 subunit A (747 aa).

The 464-residue stretch at 35–498 (LPFIGDGLKP…EAKMISESDM (464 aa)) folds into the Topo IIA-type catalytic domain. The O-(5'-phospho-DNA)-tyrosine intermediate role is filled by Tyr124.

The protein belongs to the type II topoisomerase GyrA/ParC subunit family. ParC type 1 subfamily. In terms of assembly, heterotetramer composed of ParC and ParE.

It is found in the cell membrane. The catalysed reaction is ATP-dependent breakage, passage and rejoining of double-stranded DNA.. In terms of biological role, topoisomerase IV is essential for chromosome segregation. It relaxes supercoiled DNA. Performs the decatenation events required during the replication of a circular DNA molecule. The protein is DNA topoisomerase 4 subunit A of Haemophilus influenzae (strain ATCC 51907 / DSM 11121 / KW20 / Rd).